Consider the following 480-residue polypeptide: NADH-quinone oxidoreductase subunit N (480 aa).

Helical transmembrane passes span 11–31 (LLPELVATGFLLVVLLGGVFA), 38–58 (LVAALAGLGTLASFAAAAGLL), 76–96 (FALYFKLIITATAFFTVIAAA), 105–125 (APEYMTLIIAVALGGMLLVSM), 128–148 (LFGVFLAVELATIPSYAMVAF), 163–183 (LITGVIASSFLLYGIVLIYGV), 195–215 (AFGEGLSPVAIVGLVLMISGL), 240–260 (AAFLSVAPKAAIFAALLRILL), 270–290 (WTALMAVIAIVTMFVGNLLAL), 298–318 (MLAYSSVAHSGYILAAFAALQ), 329–349 (VMIYSAAYAVMNLGAFLTIDL), 368–388 (AAAMAVFMAALVGIPPLSGFF), 407–427 (VAVAALVVNSVLSVPYYFGII), and 453–473 (VYAMALLTALFFLGVGPLAAL).

This sequence belongs to the complex I subunit 2 family. NDH-1 is composed of 14 different subunits. Subunits NuoA, H, J, K, L, M, N constitute the membrane sector of the complex.

It is found in the cell membrane. The enzyme catalyses a quinone + NADH + 5 H(+)(in) = a quinol + NAD(+) + 4 H(+)(out). In terms of biological role, NDH-1 shuttles electrons from NADH, via FMN and iron-sulfur (Fe-S) centers, to quinones in the respiratory chain. The immediate electron acceptor for the enzyme in this species is believed to be a menaquinone. Couples the redox reaction to proton translocation (for every two electrons transferred, four hydrogen ions are translocated across the cytoplasmic membrane), and thus conserves the redox energy in a proton gradient. In Rubrobacter xylanophilus (strain DSM 9941 / JCM 11954 / NBRC 16129 / PRD-1), this protein is NADH-quinone oxidoreductase subunit N.